The sequence spans 192 residues: Large ribosomal subunit protein uL5 (192 aa).

Belongs to the universal ribosomal protein uL5 family. Part of the 50S ribosomal subunit; part of the 5S rRNA/L5/L18/L25 subcomplex. Contacts the 5S rRNA and the P site tRNA. Forms a bridge to the 30S subunit in the 70S ribosome.

In terms of biological role, this is one of the proteins that bind and probably mediate the attachment of the 5S RNA into the large ribosomal subunit, where it forms part of the central protuberance. In the 70S ribosome it contacts protein S13 of the 30S subunit (bridge B1b), connecting the 2 subunits; this bridge is implicated in subunit movement. Contacts the P site tRNA; the 5S rRNA and some of its associated proteins might help stabilize positioning of ribosome-bound tRNAs. The protein is Large ribosomal subunit protein uL5 of Mesorhizobium japonicum (strain LMG 29417 / CECT 9101 / MAFF 303099) (Mesorhizobium loti (strain MAFF 303099)).